The following is a 597-amino-acid chain: MHRYRSHNCAALRKHDVGKHVRLSGWVHRVRDHGGILFVDLRDHFGITQIVANPASPAFEIIEKVRSEWVIRVDGEVCARSDEVINTVLPTGEIEIFVKEVEILSKSDELPLPVFGEPDYPEDIRLKYRFLDLRRETMHKNIMRRTEIITAIRRSMQNNGFTEFTTPLLTASSPEGARDFLVPSRIHQGKFYALPQAPQQYKQLLMMSGFDRYFQIAPCFRDEDPRADRLPGEFYQLDVEMSFVEQEDVFVTMEPIMRSIFEEFANGKPVTQNFPRISYDEAIKKYGSDKPDLRNPIIMQDVSQHFYDSCFKIFAQILTNDENAQVWAIPAKTGGSRAFCDRMNLWAQSEGQPGLGYIFWREEEGKFEGAGPIAKNIGEQRTEALRIQLGLESGDACFFIAGNPKKFSTFAGAVRTRIGEELDLIDRECFSLAWIVDFPFFEWNEDEKKLDFAHNPFSMPQGGKNALECQDPLTLKAFQYDLVCNGYEIASGGIRNHSPEMMLKVFNLAGLSREVVEDRFGALYRAFHYGAPPHGGMAAGVDRIIMLLQGVKNLREIALFPMNQQALDLLMSAPSDVSSAQLRDLGIRVAPAAKNGS.

Glu175 serves as a coordination point for L-aspartate. The interval 199–202 (QQYK) is aspartate. L-aspartate contacts are provided by Arg221 and His454. 221–223 (RDE) lines the ATP pocket. ATP is bound at residue Glu488. Arg495 is a binding site for L-aspartate. Residue 540–543 (GVDR) coordinates ATP.

It belongs to the class-II aminoacyl-tRNA synthetase family. Type 1 subfamily. Homodimer.

The protein localises to the cytoplasm. The catalysed reaction is tRNA(Asx) + L-aspartate + ATP = L-aspartyl-tRNA(Asx) + AMP + diphosphate. In terms of biological role, aspartyl-tRNA synthetase with relaxed tRNA specificity since it is able to aspartylate not only its cognate tRNA(Asp) but also tRNA(Asn). Reaction proceeds in two steps: L-aspartate is first activated by ATP to form Asp-AMP and then transferred to the acceptor end of tRNA(Asp/Asn). This chain is Aspartate--tRNA(Asp/Asn) ligase, found in Bartonella quintana (strain Toulouse) (Rochalimaea quintana).